The primary structure comprises 182 residues: Biotin carboxyl carrier protein of acetyl-CoA carboxylase (182 aa).

The disordered stretch occupies residues 70–95 (AAPSPSPEPGTSRAADHAVTSSGSQP). The 77-residue stretch at 104 to 180 (LAEVASPMVG…EYNQPLMRIK (77 aa)) folds into the Biotinyl-binding domain. Residue Lys-146 is modified to N6-biotinyllysine.

As to quaternary structure, homodimer.

It participates in lipid metabolism; fatty acid biosynthesis. In terms of biological role, this protein is a component of the acetyl coenzyme A carboxylase complex; first, biotin carboxylase catalyzes the carboxylation of the carrier protein and then the transcarboxylase transfers the carboxyl group to form malonyl-CoA. The chain is Biotin carboxyl carrier protein of acetyl-CoA carboxylase (accB) from Nostoc sp. (strain PCC 7120 / SAG 25.82 / UTEX 2576).